Consider the following 255-residue polypeptide: Ornithine decarboxylase antizyme (255 aa).

It belongs to the ODC antizyme family. As to quaternary structure, interacts with ODC and thereby sterically blocks ODC homodimerization.

Its function is as follows. Ornithine decarboxylase (ODC) antizyme protein that negatively regulates ODC activity and intracellular polyamine biosynthesis in response to increased intracellular polyamine levels. Binds to ODC monomers, inhibiting the assembly of the functional ODC homodimer, and targets the monomers for ubiquitin-independent proteolytic destruction by the 26S proteasome. This chain is Ornithine decarboxylase antizyme (OAZ1), found in Candida glabrata (strain ATCC 2001 / BCRC 20586 / JCM 3761 / NBRC 0622 / NRRL Y-65 / CBS 138) (Yeast).